A 342-amino-acid chain; its full sequence is Anthranilate phosphoribosyltransferase (342 aa).

Residues Gly-90, 93 to 94 (GS), Thr-98, 100 to 103 (NIST), 118 to 126 (KHGNRRATS), and Ser-130 contribute to the 5-phospho-alpha-D-ribose 1-diphosphate site. An anthranilate-binding site is contributed by Gly-90. Residue Ser-102 coordinates Mg(2+). Asn-121 contributes to the anthranilate binding site. An anthranilate-binding site is contributed by Arg-176. Mg(2+)-binding residues include Asp-235 and Glu-236.

Belongs to the anthranilate phosphoribosyltransferase family. In terms of assembly, homodimer. Requires Mg(2+) as cofactor.

It catalyses the reaction N-(5-phospho-beta-D-ribosyl)anthranilate + diphosphate = 5-phospho-alpha-D-ribose 1-diphosphate + anthranilate. It participates in amino-acid biosynthesis; L-tryptophan biosynthesis; L-tryptophan from chorismate: step 2/5. Its function is as follows. Catalyzes the transfer of the phosphoribosyl group of 5-phosphorylribose-1-pyrophosphate (PRPP) to anthranilate to yield N-(5'-phosphoribosyl)-anthranilate (PRA). This is Anthranilate phosphoribosyltransferase from Rhodopirellula baltica (strain DSM 10527 / NCIMB 13988 / SH1).